Here is a 100-residue protein sequence, read N- to C-terminus: MKITQEEVTHVANLSKLRFSEEETAAFATTLSKIVDMVELLGEVDTTGVAPTTTMADRKTVLRPDVAEEGTDRDRLFKNVPEQDNYYIKVPAILDDGGDA.

Belongs to the GatC family. As to quaternary structure, heterotrimer of A, B and C subunits.

It catalyses the reaction L-glutamyl-tRNA(Gln) + L-glutamine + ATP + H2O = L-glutaminyl-tRNA(Gln) + L-glutamate + ADP + phosphate + H(+). It carries out the reaction L-aspartyl-tRNA(Asn) + L-glutamine + ATP + H2O = L-asparaginyl-tRNA(Asn) + L-glutamate + ADP + phosphate + 2 H(+). Allows the formation of correctly charged Asn-tRNA(Asn) or Gln-tRNA(Gln) through the transamidation of misacylated Asp-tRNA(Asn) or Glu-tRNA(Gln) in organisms which lack either or both of asparaginyl-tRNA or glutaminyl-tRNA synthetases. The reaction takes place in the presence of glutamine and ATP through an activated phospho-Asp-tRNA(Asn) or phospho-Glu-tRNA(Gln). This is Aspartyl/glutamyl-tRNA(Asn/Gln) amidotransferase subunit C from Streptococcus pneumoniae (strain JJA).